The primary structure comprises 359 residues: 3-dehydroquinate synthase (359 aa).

NAD(+)-binding positions include 71–76 (DGEAYK), 105–109 (GVIGD), 129–130 (TT), Lys142, and Lys151. Zn(2+) contacts are provided by Glu184, His247, and His264.

The protein belongs to the sugar phosphate cyclases superfamily. Dehydroquinate synthase family. The cofactor is Co(2+). Zn(2+) is required as a cofactor. Requires NAD(+) as cofactor.

The protein localises to the cytoplasm. The catalysed reaction is 7-phospho-2-dehydro-3-deoxy-D-arabino-heptonate = 3-dehydroquinate + phosphate. The protein operates within metabolic intermediate biosynthesis; chorismate biosynthesis; chorismate from D-erythrose 4-phosphate and phosphoenolpyruvate: step 2/7. Its function is as follows. Catalyzes the conversion of 3-deoxy-D-arabino-heptulosonate 7-phosphate (DAHP) to dehydroquinate (DHQ). In Burkholderia ambifaria (strain MC40-6), this protein is 3-dehydroquinate synthase.